A 381-amino-acid polypeptide reads, in one-letter code: MSKRRVVVGMSGGVDSSVTAWLLKEQGYDVVGLFMKNWEDDDDGEYCSTRQDWIDVVSVADLIGIDVEAVNFAAEYKDRVFAEFLREYSAGRTPNPDVLCNAEIKFKAFLDHAMSLGAETIATGHYARVRERDGRFELLKAFDHTKDQSYFLHRLNQAQLSKTMFPLGEIPKTKVREIAAQIGLPNAKKKDSTGICFIGERPFRDFLNRYLPTKPGPMKTPDGKLVGEHIGLAFYTFGQRKGIGLGGSKDGSGEPWFVAAKDIASNTLYVVQGHDHPWLLSRELVAGNVSWVAGEPPAEGFACGAKTRYRQADAACTFARAGGERFSLAFADAQWAVTPGQSAVLYDGEICLGGGIIEFAATGQPGHAPAPAAAPALAEAR.

Residues 9–16 and M35 contribute to the ATP site; that span reads GMSGGVDS. Residues 95–97 form an interaction with target base in tRNA region; it reads NPD. C100 serves as the catalytic Nucleophile. C100 and C196 are oxidised to a cystine. G124 is a binding site for ATP. The interval 146-148 is interaction with tRNA; sequence KDQ. Catalysis depends on C196, which acts as the Cysteine persulfide intermediate. The interaction with tRNA stretch occupies residues 308 to 309; sequence RY.

This sequence belongs to the MnmA/TRMU family.

Its subcellular location is the cytoplasm. It carries out the reaction S-sulfanyl-L-cysteinyl-[protein] + uridine(34) in tRNA + AH2 + ATP = 2-thiouridine(34) in tRNA + L-cysteinyl-[protein] + A + AMP + diphosphate + H(+). Its function is as follows. Catalyzes the 2-thiolation of uridine at the wobble position (U34) of tRNA, leading to the formation of s(2)U34. This chain is tRNA-specific 2-thiouridylase MnmA, found in Burkholderia multivorans (strain ATCC 17616 / 249).